We begin with the raw amino-acid sequence, 152 residues long: Large ribosomal subunit protein uL22 (152 aa).

A compositionally biased stretch (low complexity) spans 124 to 145 (APKKAAAKKAAPAKETTPAATE). Positions 124 to 152 (APKKAAAKKAAPAKETTPAATESKTEGAE) are disordered.

Belongs to the universal ribosomal protein uL22 family. Part of the 50S ribosomal subunit.

Its function is as follows. This protein binds specifically to 23S rRNA; its binding is stimulated by other ribosomal proteins, e.g. L4, L17, and L20. It is important during the early stages of 50S assembly. It makes multiple contacts with different domains of the 23S rRNA in the assembled 50S subunit and ribosome. Functionally, the globular domain of the protein is located near the polypeptide exit tunnel on the outside of the subunit, while an extended beta-hairpin is found that lines the wall of the exit tunnel in the center of the 70S ribosome. This chain is Large ribosomal subunit protein uL22, found in Salinispora tropica (strain ATCC BAA-916 / DSM 44818 / JCM 13857 / NBRC 105044 / CNB-440).